A 207-amino-acid chain; its full sequence is Outer-membrane lipoprotein LolB (207 aa).

A signal peptide spans 1-21 (MPTKTVRCLRLLPLASLLLAA). Cys-22 is lipidated: N-palmitoyl cysteine. Cys-22 is lipidated: S-diacylglycerol cysteine.

This sequence belongs to the LolB family. In terms of assembly, monomer.

It localises to the cell outer membrane. Functionally, plays a critical role in the incorporation of lipoproteins in the outer membrane after they are released by the LolA protein. The protein is Outer-membrane lipoprotein LolB of Pectobacterium atrosepticum (strain SCRI 1043 / ATCC BAA-672) (Erwinia carotovora subsp. atroseptica).